Here is a 136-residue protein sequence, read N- to C-terminus: Blasticidin-S acetyltransferase (136 aa).

One can recognise an N-acetyltransferase domain in the interval 1–136; sequence MLSLPRLQTV…ITSHLLVKEL (136 aa).

In terms of biological role, confers resistance to blasticidin S antibiotic. This chain is Blasticidin-S acetyltransferase (bls), found in Streptomyces morookaense (Streptoverticillium morookaense).